A 298-amino-acid chain; its full sequence is Quinolinate synthase (298 aa).

Iminosuccinate contacts are provided by histidine 19 and serine 36. Cysteine 81 contacts [4Fe-4S] cluster. Residues 107-109 (YVN) and serine 124 each bind iminosuccinate. Cysteine 168 lines the [4Fe-4S] cluster pocket. Iminosuccinate-binding positions include 193–195 (HPE) and threonine 210. Position 254 (cysteine 254) interacts with [4Fe-4S] cluster.

It belongs to the quinolinate synthase family. Type 2 subfamily. Requires [4Fe-4S] cluster as cofactor.

The protein resides in the cytoplasm. The catalysed reaction is iminosuccinate + dihydroxyacetone phosphate = quinolinate + phosphate + 2 H2O + H(+). It participates in cofactor biosynthesis; NAD(+) biosynthesis; quinolinate from iminoaspartate: step 1/1. Its activity is regulated as follows. Inhibited by 4,5 dithiohydroxyphthalic acid (DTHPA) analogs, which bind to the catalytic iron site of the [4Fe-4S] cluster. In terms of biological role, catalyzes the condensation of iminoaspartate with dihydroxyacetone phosphate to form quinolinate. This Thermotoga maritima (strain ATCC 43589 / DSM 3109 / JCM 10099 / NBRC 100826 / MSB8) protein is Quinolinate synthase.